Here is a 98-residue protein sequence, read N- to C-terminus: Pancreatic polypeptide prohormone (98 aa).

Positions 1 to 29 (MAVAYYCLSLFLLSTWVALLLQPLQGAWG) are cleaved as a signal peptide. Tyr-65 carries the tyrosine amide modification.

This sequence belongs to the NPY family. In terms of processing, no icosapeptide-like peptide is cleaved from the C-terminal.

It localises to the secreted. Its function is as follows. Hormone secreted by pancreatic cells that acts as a regulator of pancreatic and gastrointestinal functions probably by signaling through the G protein-coupled receptor NPY4R2. The polypeptide is Pancreatic polypeptide prohormone (Ppy) (Rattus norvegicus (Rat)).